A 252-amino-acid chain; its full sequence is MKYIYNFLLMIQFLTRIPVKRSLPCEKEDFRRGAAMLPLIGLIVGCIQWVVFYILSKIFPANITAIFIILVGMVLIGGLHQDGLGDIFDGFFSFKGDKEKIIEIMKDSRVGTFAVLALIFDILIKYSALSFIIENNMSYAIIITPIMSRCTLVFLFLIGKNAKKNGTGNLFIENVSVKEFIISFIFMIVPSVLLIGYKYSVIIIVVSFIITLAFLNLCNRKIGGITGDCLGANNEIVEMFTMLVFVALLYIN.

7 helical membrane passes run 35-55 (AMLPLIGLIVGCIQWVVFYIL), 58-78 (IFPANITAIFIILVGMVLIGG), 113-133 (FAVLALIFDILIKYSALSFII), 139-159 (YAIIITPIMSRCTLVFLFLIG), 170-190 (LFIENVSVKEFIISFIFMIVP), 192-212 (VLLIGYKYSVIIIVVSFIITL), and 231-251 (GANNEIVEMFTMLVFVALLYI).

Belongs to the CobS family. Requires Mg(2+) as cofactor.

It is found in the cell membrane. It catalyses the reaction alpha-ribazole + adenosylcob(III)inamide-GDP = adenosylcob(III)alamin + GMP + H(+). It carries out the reaction alpha-ribazole 5'-phosphate + adenosylcob(III)inamide-GDP = adenosylcob(III)alamin 5'-phosphate + GMP + H(+). The protein operates within cofactor biosynthesis; adenosylcobalamin biosynthesis; adenosylcobalamin from cob(II)yrinate a,c-diamide: step 7/7. Functionally, joins adenosylcobinamide-GDP and alpha-ribazole to generate adenosylcobalamin (Ado-cobalamin). Also synthesizes adenosylcobalamin 5'-phosphate from adenosylcobinamide-GDP and alpha-ribazole 5'-phosphate. The polypeptide is Adenosylcobinamide-GDP ribazoletransferase (Clostridium tetani (strain Massachusetts / E88)).